The sequence spans 407 residues: tRNA (guanine(26)-N(2))-dimethyltransferase (407 aa).

One can recognise a Trm1 methyltransferase domain in the interval 10–400 (AVTHEGRSII…APWGEVLEAV (391 aa)). S-adenosyl-L-methionine-binding residues include R50, R82, D99, and E128.

The protein belongs to the class I-like SAM-binding methyltransferase superfamily. Trm1 family.

It catalyses the reaction guanosine(26) in tRNA + 2 S-adenosyl-L-methionine = N(2)-dimethylguanosine(26) in tRNA + 2 S-adenosyl-L-homocysteine + 2 H(+). Dimethylates a single guanine residue at position 26 of a number of tRNAs using S-adenosyl-L-methionine as donor of the methyl groups. This is tRNA (guanine(26)-N(2))-dimethyltransferase from Aeropyrum pernix (strain ATCC 700893 / DSM 11879 / JCM 9820 / NBRC 100138 / K1).